The chain runs to 333 residues: Phenylalanine--tRNA ligase alpha subunit (333 aa).

Residue Glu258 coordinates Mg(2+).

This sequence belongs to the class-II aminoacyl-tRNA synthetase family. Phe-tRNA synthetase alpha subunit type 1 subfamily. As to quaternary structure, tetramer of two alpha and two beta subunits. Requires Mg(2+) as cofactor.

The protein resides in the cytoplasm. The enzyme catalyses tRNA(Phe) + L-phenylalanine + ATP = L-phenylalanyl-tRNA(Phe) + AMP + diphosphate + H(+). The sequence is that of Phenylalanine--tRNA ligase alpha subunit from Wigglesworthia glossinidia brevipalpis.